Reading from the N-terminus, the 122-residue chain is Large ribosomal subunit protein uL14 (122 aa).

Belongs to the universal ribosomal protein uL14 family. As to quaternary structure, part of the 50S ribosomal subunit. Forms a cluster with proteins L3 and L19. In the 70S ribosome, L14 and L19 interact and together make contacts with the 16S rRNA in bridges B5 and B8.

Its function is as follows. Binds to 23S rRNA. Forms part of two intersubunit bridges in the 70S ribosome. In Chlorobium luteolum (strain DSM 273 / BCRC 81028 / 2530) (Pelodictyon luteolum), this protein is Large ribosomal subunit protein uL14.